We begin with the raw amino-acid sequence, 458 residues long: ATP synthase subunit beta (458 aa).

Residue 148-155 coordinates ATP; the sequence is GGAGVGKT.

It belongs to the ATPase alpha/beta chains family. As to quaternary structure, F-type ATPases have 2 components, CF(1) - the catalytic core - and CF(0) - the membrane proton channel. CF(1) has five subunits: alpha(3), beta(3), gamma(1), delta(1), epsilon(1). CF(0) has three main subunits: a(1), b(2) and c(9-12). The alpha and beta chains form an alternating ring which encloses part of the gamma chain. CF(1) is attached to CF(0) by a central stalk formed by the gamma and epsilon chains, while a peripheral stalk is formed by the delta and b chains.

The protein localises to the cell inner membrane. The enzyme catalyses ATP + H2O + 4 H(+)(in) = ADP + phosphate + 5 H(+)(out). Produces ATP from ADP in the presence of a proton gradient across the membrane. The catalytic sites are hosted primarily by the beta subunits. The chain is ATP synthase subunit beta from Pseudomonas fluorescens (strain SBW25).